Consider the following 101-residue polypeptide: Integration host factor subunit beta (101 aa).

The disordered stretch occupies residues 57–77 (PARAGRNPRTGAHVPVDQKSV).

The protein belongs to the bacterial histone-like protein family. In terms of assembly, heterodimer of an alpha and a beta chain.

Functionally, this protein is one of the two subunits of integration host factor, a specific DNA-binding protein that functions in genetic recombination as well as in transcriptional and translational control. This chain is Integration host factor subunit beta, found in Rhodopseudomonas palustris (strain HaA2).